The primary structure comprises 465 residues: Probable citrate synthase, mitochondrial (465 aa).

Active-site residues include His303, His349, and Asp404.

It belongs to the citrate synthase family. As to quaternary structure, homodimer.

The protein resides in the mitochondrion matrix. The catalysed reaction is oxaloacetate + acetyl-CoA + H2O = citrate + CoA + H(+). It participates in carbohydrate metabolism; tricarboxylic acid cycle; isocitrate from oxaloacetate: step 1/2. The sequence is that of Probable citrate synthase, mitochondrial from Glossina morsitans morsitans (Savannah tsetse fly).